The following is a 366-amino-acid chain: RNA 3'-terminal phosphate cyclase (366 aa).

Positions 104, 131, 294, 297, 298, and 320 each coordinate ATP. The Tele-AMP-histidine intermediate role is filled by His320.

Belongs to the RNA 3'-terminal cyclase family. Type 1 subfamily. In terms of tissue distribution, detected in retinal ganglion cells (RGCs) (at protein level).

The protein resides in the nucleus. The protein localises to the nucleoplasm. It catalyses the reaction a 3'-end 3'-phospho-ribonucleotide-RNA + ATP = a 3'-end 2',3'-cyclophospho-ribonucleotide-RNA + AMP + diphosphate. Catalyzes the conversion of 3'-phosphate to a 2',3'-cyclic phosphodiester at the end of RNA. The mechanism of action of the enzyme occurs in 3 steps: (A) adenylation of the enzyme by ATP; (B) transfer of adenylate to an RNA-N3'P to produce RNA-N3'PP5'A; (C) and attack of the adjacent 2'-hydroxyl on the 3'-phosphorus in the diester linkage to produce the cyclic end product. Likely functions in some aspects of cellular RNA processing. Function plays an important role in regulating axon regeneration by inhibiting central nervous system (CNS) axon regeneration following optic nerve injury. In Mus musculus (Mouse), this protein is RNA 3'-terminal phosphate cyclase.